We begin with the raw amino-acid sequence, 306 residues long: 4-diphosphocytidyl-2-C-methyl-D-erythritol kinase (306 aa).

Lysine 11 is a catalytic residue. An ATP-binding site is contributed by 113 to 123 (PPEGGIGGGSS). Aspartate 153 is a catalytic residue.

The protein belongs to the GHMP kinase family. IspE subfamily.

It carries out the reaction 4-CDP-2-C-methyl-D-erythritol + ATP = 4-CDP-2-C-methyl-D-erythritol 2-phosphate + ADP + H(+). The protein operates within isoprenoid biosynthesis; isopentenyl diphosphate biosynthesis via DXP pathway; isopentenyl diphosphate from 1-deoxy-D-xylulose 5-phosphate: step 3/6. Its function is as follows. Catalyzes the phosphorylation of the position 2 hydroxy group of 4-diphosphocytidyl-2C-methyl-D-erythritol. The chain is 4-diphosphocytidyl-2-C-methyl-D-erythritol kinase from Leptospira biflexa serovar Patoc (strain Patoc 1 / ATCC 23582 / Paris).